A 275-amino-acid polypeptide reads, in one-letter code: Mitochondrial outer membrane protein porin (275 aa).

M1 carries the blocked amino end (Met) modification.

This sequence belongs to the eukaryotic mitochondrial porin family. Highly divergent.

The protein localises to the mitochondrion outer membrane. Its function is as follows. Forms a channel of about 1,7 nM through the cell membrane that allows diffusion of small hydrophilic molecules. The channel adopts an open conformation at low or zero membrane potential and a closed conformation at potentials above 20 mv. The open state has a weak anion selectivity whereas the closed state is cation-selective. The sequence is that of Mitochondrial outer membrane protein porin (porA) from Dictyostelium discoideum (Social amoeba).